Reading from the N-terminus, the 132-residue chain is Phosphoribosyl-AMP cyclohydrolase (132 aa).

Aspartate 89 contributes to the Mg(2+) binding site. Cysteine 90 provides a ligand contact to Zn(2+). Residues aspartate 91 and aspartate 93 each coordinate Mg(2+). Positions 106 and 113 each coordinate Zn(2+).

The protein belongs to the PRA-CH family. In terms of assembly, homodimer. Mg(2+) serves as cofactor. Zn(2+) is required as a cofactor.

It is found in the cytoplasm. It carries out the reaction 1-(5-phospho-beta-D-ribosyl)-5'-AMP + H2O = 1-(5-phospho-beta-D-ribosyl)-5-[(5-phospho-beta-D-ribosylamino)methylideneamino]imidazole-4-carboxamide. It functions in the pathway amino-acid biosynthesis; L-histidine biosynthesis; L-histidine from 5-phospho-alpha-D-ribose 1-diphosphate: step 3/9. Functionally, catalyzes the hydrolysis of the adenine ring of phosphoribosyl-AMP. This chain is Phosphoribosyl-AMP cyclohydrolase, found in Renibacterium salmoninarum (strain ATCC 33209 / DSM 20767 / JCM 11484 / NBRC 15589 / NCIMB 2235).